Consider the following 80-residue polypeptide: Peptide LaIT2 (80 aa).

The first 21 residues, Met1–Cys21, serve as a signal peptide directing secretion. The 32-residue stretch at Gln49–Ser80 folds into the BetaSPN-type CS-alpha/beta domain. 3 cysteine pairs are disulfide-bonded: Cys52–Cys72, Cys59–Cys77, and Cys63–Cys79.

It belongs to the long chain scorpion toxin family. Class 2 subfamily. As to expression, expressed by the venom gland.

It localises to the secreted. In terms of biological role, dual-function toxin that acts both as an insecticidal and an antimicrobial peptide. May inhibit voltage-gated potassium channels (Kv). This amphipathic peptide causes significant antimicrobial activity against E.coli (MIC=7 uM) but does not show any activity against S.aureus even at high concentration. In vivo, causes paralysis or death to crickets. The sequence is that of Peptide LaIT2 from Liocheles australasiae (Dwarf wood scorpion).